The sequence spans 280 residues: Dual adapter for phosphotyrosine and 3-phosphotyrosine and 3-phosphoinositide (280 aa).

The region spanning 35–129 (WYHGNLTRHA…GTLMVLKHPY (95 aa)) is the SH2 domain. Tyr-139 carries the phosphotyrosine modification. At Ser-141 the chain carries Phosphoserine. Residues 164-259 (LGTKEGYLTK…WIKILRWKLS (96 aa)) form the PH domain.

As to quaternary structure, interacts with PtdIns(3,4,5)P3 and PLCG2. Phosphorylated on tyrosine residues.

The protein localises to the cytoplasm. Its subcellular location is the membrane. Functionally, may act as a B-cell-associated adapter that regulates B-cell antigen receptor (BCR)-signaling downstream of PI3K. The polypeptide is Dual adapter for phosphotyrosine and 3-phosphotyrosine and 3-phosphoinositide (Dapp1) (Mus musculus (Mouse)).